The chain runs to 391 residues: Probable acridone synthase 4 (391 aa).

Cys164 is a catalytic residue.

The protein belongs to the thiolase-like superfamily. Chalcone/stilbene synthases family.

It carries out the reaction N-methylanthraniloyl-CoA + 3 malonyl-CoA + 3 H(+) = 1,3-dihydroxy-N-methylacridone + 3 CO2 + 4 CoA + H2O. The sequence is that of Probable acridone synthase 4 (ACS4) from Ruta graveolens (Common rue).